Reading from the N-terminus, the 457-residue chain is Succinate-semialdehyde dehydrogenase [NADP(+)] (457 aa).

Residues 133–134 (WN), 157–160 (KHAS), and 209–210 (GS) contribute to the NADP(+) site. Glutamate 231 functions as the Proton acceptor in the catalytic mechanism. Residue leucine 232 coordinates NADP(+). Cysteine 265 acts as the Nucleophile in catalysis. Glutamate 362 lines the NADP(+) pocket.

This sequence belongs to the aldehyde dehydrogenase family.

It catalyses the reaction succinate semialdehyde + NADP(+) + H2O = succinate + NADPH + 2 H(+). Functionally, catalyzes the NADP(+)-dependent oxidation of succinate semialdehyde to succinate. It is believed to be the main source of succinate semialdehyde dehydrogenase activity in Mycobacterium. In Mycobacterium leprae (strain TN), this protein is Succinate-semialdehyde dehydrogenase [NADP(+)] (gabD1).